We begin with the raw amino-acid sequence, 358 residues long: Feruloyl esterase B (358 aa).

Positions 1–18 (MAIPLVLLLAWLLPTVFA) are cleaved as a signal peptide. The interval 19–291 (ASLTQVSNFG…VSVVLDWFGI (273 aa)) is catalytic. Ser-136 functions as the Charge relay system in the catalytic mechanism. N-linked (GlcNAc...) asparagine glycans are attached at residues Asn-179 and Asn-246. Residues 292–321 (TGGGGGNGGGSGSTTTTTSATTTSTGPTGG) form a gly/Thr-rich linker region. Positions 297–318 (GNGGGSGSTTTTTSATTTSTGP) are disordered. The span at 304 to 318 (STTTTTSATTTSTGP) shows a compositional bias: low complexity. Residues 322 to 358 (CTAAHWDQCGGNGYTGCTSCASPYTCQKVNDYYSQCL) enclose the CBM1 domain.

The protein belongs to the carbohydrate esterase 1 (CE1) family. Feruloyl esterase type B subfamily.

The protein resides in the secreted. The catalysed reaction is feruloyl-polysaccharide + H2O = ferulate + polysaccharide.. In terms of biological role, involved in degradation of plant cell walls. Hydrolyzes the feruloyl-arabinose ester bond in arabinoxylans as well as the feruloyl-galactose and feruloyl-arabinose ester bonds in pectin. Active against methyl esters of caffeate (MCA), but not sinapate (MSA). The sequence is that of Feruloyl esterase B (faeB) from Talaromyces stipitatus (strain ATCC 10500 / CBS 375.48 / QM 6759 / NRRL 1006) (Penicillium stipitatum).